The primary structure comprises 207 residues: Small ribosomal subunit protein uS4 (207 aa).

The tract at residues 31–56 (KCKLDSKPGQHGRTSGARTSDYGNQL) is disordered. Residues 42–53 (GRTSGARTSDYG) are compositionally biased toward polar residues. An S4 RNA-binding domain is found at 97 to 157 (ARLDNVVYRM…EKSKKQVRIV (61 aa)).

The protein belongs to the universal ribosomal protein uS4 family. As to quaternary structure, part of the 30S ribosomal subunit. Contacts protein S5. The interaction surface between S4 and S5 is involved in control of translational fidelity.

Its function is as follows. One of the primary rRNA binding proteins, it binds directly to 16S rRNA where it nucleates assembly of the body of the 30S subunit. Functionally, with S5 and S12 plays an important role in translational accuracy. This is Small ribosomal subunit protein uS4 from Janthinobacterium sp. (strain Marseille) (Minibacterium massiliensis).